The chain runs to 281 residues: Protein DOG1-like 1 (281 aa).

Positions 9–265 constitute a DOG1 domain; the sequence is EKLQQDCYNE…HEWGKSREHR (257 aa). A disordered region spans residues 262–281; sequence REHRRLEASGGDSGGNVTRE.

The sequence is that of Protein DOG1-like 1 from Arabidopsis thaliana (Mouse-ear cress).